The sequence spans 305 residues: Mitochondrial thiamine pyrophosphate carrier 1 (305 aa).

The next 6 helical transmembrane spans lie at 16-32, 84-100, 122-142, 169-193, 213-229, and 270-287; these read VSPYESLLAGSISGAVA, ILYVLYGAAQFTTYSSI, LVSGTGAGVVSTLVTYPFDLL, GFTGLFAGIKPAMLSISTTTGLMFW, ICGFIAGATSKGITFPL, and GFGISVLKTSPTSAVSLF. 3 Solcar repeats span residues 16–103, 116–201, and 206–295; these read VSPY…ISRW, PSSA…VRET, and DIPF…SLAA.

The protein belongs to the mitochondrial carrier (TC 2.A.29) family.

It is found in the mitochondrion inner membrane. Its function is as follows. Mitochondrial transporter that mediates uptake of thiamine pyrophosphate (ThPP) into mitochondria. This is Mitochondrial thiamine pyrophosphate carrier 1 (TPC1) from Scheffersomyces stipitis (strain ATCC 58785 / CBS 6054 / NBRC 10063 / NRRL Y-11545) (Yeast).